Consider the following 81-residue polypeptide: Protein Vpu (81 aa).

The Extracellular segment spans residues 1–7; it reads MQSLEIL. The helical transmembrane segment at 8 to 28 threads the bilayer; it reads AIVALVVAAILAIVVWTIVGI. Topologically, residues 29–81 are cytoplasmic; sequence EIRKTLRQKKIDRLIDRIRERAEDSGNESDGDEEELSALVEMGHHAPWDVDDL. The interval 50-81 is disordered; sequence AEDSGNESDGDEEELSALVEMGHHAPWDVDDL. Residues serine 53 and serine 57 each carry the phosphoserine; by host CK2 modification. Acidic residues predominate over residues 53–64; sequence SGNESDGDEEEL. Residues 70–81 show a composition bias toward basic and acidic residues; it reads MGHHAPWDVDDL.

It belongs to the HIV-1 VPU protein family. Homopentamer. Interacts with host CD4 and BRTC; these interactions induce proteasomal degradation of CD4. Interacts with host BST2; this interaction leads to the degradation of host BST2. Interacts with host FBXW11. Interacts with host AP1M1; this interaction plays a role in the mistrafficking and subsequent degradation of host BST2. Interacts with host RANBP2; this interaction allows Vpu to down-regulate host BLM sumoylation. Post-translationally, phosphorylated by host CK2. This phosphorylation is necessary for interaction with human BTRC and degradation of CD4.

The protein localises to the host membrane. Its activity is regulated as follows. Ion channel activity is inhibited by hexamethylene amiloride in vitro. Enhances virion budding by targeting host CD4 and Tetherin/BST2 to proteasome degradation. Degradation of CD4 prevents any unwanted premature interactions between viral Env and its host receptor CD4 in the endoplasmic reticulum. Degradation of antiretroviral protein Tetherin/BST2 is important for virion budding, as BST2 tethers new viral particles to the host cell membrane. Mechanistically, Vpu bridges either CD4 or BST2 to BTRC, a substrate recognition subunit of the Skp1/Cullin/F-box protein E3 ubiquitin ligase, induces their ubiquitination and subsequent proteasomal degradation. The alteration of the E3 ligase specificity by Vpu seems to promote the degradation of host IKBKB, leading to NF-kappa-B down-regulation and subsequent apoptosis. Acts as a viroporin that forms an oligomeric ion channel in membranes. Modulates the host DNA repair mechanisms to promote degradation of nuclear viral cDNA in cells that are already productively infected in order to suppress immune sensing and proviral hyper-integration (superinfection). Manipulates PML-NBs and modulates SUMOylation of host BLM protein thereby enhancing its DNA-end processing activity toward viral unintegrated linear DNA. Also inhibits RAD52-mediated homologous repair of viral cDNA, preventing the generation of dead-end circular forms of single copies of the long terminal repeat and permitting sustained nucleolytic attack. The polypeptide is Protein Vpu (Homo sapiens (Human)).